Here is an 800-residue protein sequence, read N- to C-terminus: MAARGRRAWLSMLLGLVLGFVLASRLVLPRASELKRVGPRRRPSPEGCRPGQEASQPGGARGDARGAQLWPQGSAAEGVPRDRNFLFVGVMTAQKYLQTRAVAAYRTWSKTIPGKVEFFSSEGSDTSIPIPVVPLRGVDDSYPPQKKSFMMLKYMHDHYLDKYEWFMRADDDVYIKGDRLESFLRSLNSSEPLFLGQTGLGTTEEMGKLALEPGENFCMGGPGVILSREVLRRMAPHIGKCLREMYTTHEDVEVGRCVRRFAGVQCVWSYEMQQLFYENYEQNKKGYIRDLHSSKIHRAITLHPNKNPPYQYRLHSYMLSRKIAELRHRTIQLHREIVLMSKYSSTEIQKEDLQLGIPPSFMRFQARQREEILEWEFLTGKYLYSATDGQPPRRGMDSAQREALDDIVMQVMEMINANAKTRGRIIDFKEIQYGYRRVNPMYGAEYILDLLLLYKKHKGKKMTVPVRRHAYLQQTFSKMQFVEHEELDAQELADRINQDSGSLSFLSNSLKKLVAFQLPGSKTEHKEPKEKKINILIPLSGRFDMFVRFMGNFEKTCLIPNLNVKLVILLFNSDSNPDKAKQVELMRDYRVKYPKADMQVLPVSGGFSRALALEVGSSQFNNESLLFFCDVDLVFTAEFLQRCRANTVLGQQIYFPIIFSQYDPKIVYSGKVPSDNHFAFTQKTGFWRNYGFGITCIYKGDLVRVGGFDVSIQGWGLEDVDLFNKVVQAGLKTFRSQEVGVVHIHHPVVCDPNLDPKQYKMCLGSKASTFGSTQQLAEMWLEKNDPSYSKGGSHGSARTA.

At 1–7 the chain is on the cytoplasmic side; that stretch reads MAARGRR. A helical; Signal-anchor for type II membrane protein transmembrane segment spans residues 8–28; sequence AWLSMLLGLVLGFVLASRLVL. Over 29–800 the chain is Lumenal; the sequence is PRASELKRVG…GGSHGSARTA (772 aa). Residues 36–66 form a disordered region; sequence RVGPRRRPSPEGCRPGQEASQPGGARGDARG. 2 N-linked (GlcNAc...) asparagine glycosylation sites follow: asparagine 188 and asparagine 622. A divalent metal cation-binding residues include aspartate 632 and histidine 746.

The protein belongs to the chondroitin N-acetylgalactosaminyltransferase family. Co(2+) is required as a cofactor. Requires Mn(2+) as cofactor. The cofactor is Cd(2+).

The protein resides in the golgi apparatus. It localises to the golgi stack membrane. Its subcellular location is the secreted. The catalysed reaction is 3-O-(beta-D-GlcA-(1-&gt;3)-beta-D-GalNAc-(1-&gt;4)-beta-D-GlcA-(1-&gt;3)-beta-D-Gal-(1-&gt;3)-beta-D-Gal-(1-&gt;4)-beta-D-Xyl)-L-seryl-[protein] + UDP-N-acetyl-alpha-D-galactosamine = 3-O-(beta-D-GalNAc-(1-&gt;4)-beta-D-GlcA-(1-&gt;3)-beta-D-GalNAc-(1-&gt;4)-beta-D-GlcA-(1-&gt;3)-beta-D-Gal-(1-&gt;3)-beta-D-Gal-(1-&gt;4)-beta-D-Xyl)-L-seryl-[protein] + UDP + H(+). It catalyses the reaction 3-O-{beta-D-GlcA-(1-&gt;3)-[beta-D-GalNAc-(1-&gt;4)-beta-D-GlcA-(1-&gt;3)](n)-beta-D-GalNAc-(1-&gt;4)-beta-D-GlcA-(1-&gt;3)-beta-D-Gal-(1-&gt;3)-beta-D-Gal-(1-&gt;4)-beta-D-Xyl}-L-seryl-[protein] + UDP-N-acetyl-alpha-D-galactosamine = 3-O-{[beta-D-GalNAc-(1-&gt;4)-beta-D-GlcA-(1-&gt;3)](n+1)-beta-D-GalNAc-(1-&gt;4)-beta-D-GlcA-(1-&gt;3)-beta-D-Gal-(1-&gt;3)-beta-D-Gal-(1-&gt;4)-beta-D-Xyl}-L-seryl-[protein] + UDP + H(+). The enzyme catalyses 3-O-(beta-D-GalNAc-(1-&gt;4)-beta-D-GlcA-(1-&gt;3)-beta-D-Gal-(1-&gt;3)-beta-D-Gal-(1-&gt;4)-beta-D-Xyl)-L-seryl-[protein] + UDP-alpha-D-glucuronate = 3-O-(beta-D-GlcA-(1-&gt;3)-beta-D-GalNAc-(1-&gt;4)-beta-D-GlcA-(1-&gt;3)-beta-D-Gal-(1-&gt;3)-beta-D-Gal-(1-&gt;4)-beta-D-Xyl)-L-seryl-[protein] + UDP + H(+). It carries out the reaction 3-O-{[beta-D-GalNAc-(1-&gt;4)-beta-D-GlcA-(1-&gt;3)](n)-beta-D-GalNAc-(1-&gt;4)-beta-D-GlcA-(1-&gt;3)-beta-D-Gal-(1-&gt;3)-beta-D-Gal-(1-&gt;4)-beta-D-Xyl}-L-seryl-[protein] + UDP-alpha-D-glucuronate = 3-O-{beta-D-GlcA-(1-&gt;3)-[beta-D-GalNAc-(1-&gt;4)-beta-D-GlcA-(1-&gt;3)](n)-beta-D-GalNAc-(1-&gt;4)-beta-D-GlcA-(1-&gt;3)-beta-D-Gal-(1-&gt;3)-beta-D-Gal-(1-&gt;4)-beta-D-Xyl}-L-seryl-[protein] + UDP + H(+). In terms of biological role, has both beta-1,3-glucuronic acid and beta-1,4-N-acetylgalactosamine transferase activity. Transfers glucuronic acid (GlcUA) from UDP-GlcUA and N-acetylgalactosamine (GalNAc) from UDP-GalNAc to the non-reducing end of the elongating chondroitin polymer. Involved in the negative control of osteogenesis likely through the modulation of NOTCH signaling. The sequence is that of Chondroitin sulfate synthase 1 (Chsy1) from Mus musculus (Mouse).